A 252-amino-acid polypeptide reads, in one-letter code: Phosphate import ATP-binding protein PstB (252 aa).

Residues 6–247 form the ABC transporter domain; it reads ITIEKLNLYY…PKDERTEKYI (242 aa). Position 38–45 (38–45) interacts with ATP; it reads GPSGCGKS.

This sequence belongs to the ABC transporter superfamily. Phosphate importer (TC 3.A.1.7) family. In terms of assembly, the complex is composed of two ATP-binding proteins (PstB), two transmembrane proteins (PstC and PstA) and a solute-binding protein (PstS).

The protein resides in the cell membrane. It carries out the reaction phosphate(out) + ATP + H2O = ADP + 2 phosphate(in) + H(+). Its function is as follows. Part of the ABC transporter complex PstSACB involved in phosphate import. Responsible for energy coupling to the transport system. This Lactobacillus delbrueckii subsp. bulgaricus (strain ATCC 11842 / DSM 20081 / BCRC 10696 / JCM 1002 / NBRC 13953 / NCIMB 11778 / NCTC 12712 / WDCM 00102 / Lb 14) protein is Phosphate import ATP-binding protein PstB.